The chain runs to 387 residues: Fetuin-B (387 aa).

A signal peptide spans 1–18; the sequence is MNVLLLLVLCTLAMGCGA. Cystatin fetuin-B-type domains are found at residues 25 to 139 and 150 to 258; these read AARP…YNCT and MTCP…VTCS. Asn-37 carries an N-linked (GlcNAc...) asparagine glycan. Cystine bridges form between Cys-94/Cys-105, Cys-118/Cys-138, Cys-152/Cys-155, Cys-217/Cys-225, and Cys-238/Cys-257. N-linked (GlcNAc...) asparagine glycosylation is present at Asn-137. The segment at 264 to 306 is disordered; that stretch reads APTPRGENATVNQRPANPSKTEELQQQNTAPTNSPTKAVPKGS. The N-linked (GlcNAc...) asparagine glycan is linked to Asn-271. A compositionally biased stretch (polar residues) spans 272–299; sequence ATVNQRPANPSKTEELQQQNTAPTNSPT. Residues Thr-292 and Thr-295 are each glycosylated (O-linked (GalNAc...) threonine). A Phosphoserine modification is found at Ser-320. The tract at residues 366–387 is disordered; the sequence is KEQRSAECPGPAQKGYPFILPS.

The protein belongs to the fetuin family. In terms of tissue distribution, liver and testis.

It is found in the secreted. In terms of biological role, protease inhibitor required for egg fertilization. Required to prevent premature zona pellucida hardening before fertilization, probably by inhibiting the protease activity of ASTL, a protease that mediates the cleavage of ZP2 and triggers zona pellucida hardening. The protein is Fetuin-B (FETUB) of Bos taurus (Bovine).